Consider the following 228-residue polypeptide: L-ribulose-5-phosphate 4-epimerase UlaF (228 aa).

Residues 26–27, 43–44, and 72–73 each bind substrate; these read GN, SG, and SS. The Zn(2+) site is built by Asp-74, His-93, and His-95. Catalysis depends on Asp-118, which acts as the Proton donor/acceptor. Zn(2+) is bound at residue His-167. Residue Tyr-225 is the Proton donor/acceptor of the active site.

It belongs to the aldolase class II family. AraD/FucA subfamily. Zn(2+) is required as a cofactor.

The catalysed reaction is L-ribulose 5-phosphate = D-xylulose 5-phosphate. It functions in the pathway cofactor degradation; L-ascorbate degradation; D-xylulose 5-phosphate from L-ascorbate: step 4/4. In terms of biological role, catalyzes the isomerization of L-ribulose 5-phosphate to D-xylulose 5-phosphate. Is involved in the anaerobic L-ascorbate utilization. This Escherichia coli (strain ATCC 8739 / DSM 1576 / NBRC 3972 / NCIMB 8545 / WDCM 00012 / Crooks) protein is L-ribulose-5-phosphate 4-epimerase UlaF.